We begin with the raw amino-acid sequence, 229 residues long: Putative N-acetylmannosamine-6-phosphate 2-epimerase (229 aa).

It belongs to the NanE family.

The enzyme catalyses an N-acyl-D-glucosamine 6-phosphate = an N-acyl-D-mannosamine 6-phosphate. Its pathway is amino-sugar metabolism; N-acetylneuraminate degradation; D-fructose 6-phosphate from N-acetylneuraminate: step 3/5. In terms of biological role, converts N-acetylmannosamine-6-phosphate (ManNAc-6-P) to N-acetylglucosamine-6-phosphate (GlcNAc-6-P). This is Putative N-acetylmannosamine-6-phosphate 2-epimerase from Escherichia fergusonii (strain ATCC 35469 / DSM 13698 / CCUG 18766 / IAM 14443 / JCM 21226 / LMG 7866 / NBRC 102419 / NCTC 12128 / CDC 0568-73).